Here is a 176-residue protein sequence, read N- to C-terminus: Ribosome maturation factor RimM (176 aa).

Residues 93-172 (EGEFFYFDVL…EILTKDAKSI (80 aa)) enclose the PRC barrel domain.

The protein belongs to the RimM family. As to quaternary structure, binds ribosomal protein uS19.

The protein localises to the cytoplasm. Functionally, an accessory protein needed during the final step in the assembly of 30S ribosomal subunit, possibly for assembly of the head region. Essential for efficient processing of 16S rRNA. May be needed both before and after RbfA during the maturation of 16S rRNA. It has affinity for free ribosomal 30S subunits but not for 70S ribosomes. This Campylobacter curvus (strain 525.92) protein is Ribosome maturation factor RimM.